Here is a 628-residue protein sequence, read N- to C-terminus: Leucine-rich repeat and fibronectin type-III domain-containing protein 3 (628 aa).

An N-terminal signal peptide occupies residues 1 to 16 (MAVLPLLLCLLPLAPA). Topologically, residues 17–540 (SSPSQPATPS…APHAPFLGGT (524 aa)) are extracellular. An LRRNT domain is found at 19 to 59 (PSQPATPSPCPRRCRCQTQSLPLSVLCPGAGLLFVPPSLDR). LRR repeat units lie at residues 84 to 105 (GLLH…AFAD), 108 to 129 (ALRA…QLRG), 132 to 153 (NLRH…ALDD), 157 to 178 (TLED…ALGR), 181 to 202 (NVNT…AFSR), and 205 to 226 (KLAR…PLFS). One can recognise an LRRCT domain in the interval 249-295 (NPLHCNCELVWLRRLAREDDLEACASPPALGGRYFWAVGEEEFVCEP). One can recognise an Ig-like domain in the interval 295–382 (PPVVTHRSPP…GEATAAVELT (88 aa)). Cys-317 and Cys-366 form a disulfide bridge. Asn-348 and Asn-393 each carry an N-linked (GlcNAc...) asparagine glycan. The segment at 380-432 (ELTVGPPPPPQLANSTSCDPPRDGDPDALTPPSAASASAAAKAADTGPPTDRG) is disordered. Positions 406–429 (DALTPPSAASASAAAKAADTGPPT) are enriched in low complexity. The Fibronectin type-III domain occupies 427 to 525 (PPTDRGVQVT…GCARFSTEPA (99 aa)). The chain crosses the membrane as a helical span at residues 541 to 561 (MIIALGGVIVASVLVFIFVLL). Topologically, residues 562–628 (MRYKVHGGQP…WRPSHEPTGP (67 aa)) are cytoplasmic. The tract at residues 587–628 (QTNGSLGPTPAPPAPEPAAPRAHTVVQLDCEPWRPSHEPTGP) is disordered. A compositionally biased stretch (pro residues) spans 595 to 604 (TPAPPAPEPA). Residues 617–628 (EPWRPSHEPTGP) show a composition bias toward basic and acidic residues.

Belongs to the LRFN family. As to quaternary structure, can form heteromeric complexes with LRFN1, LRFN2, LRFN4 and LRFN5. Able to form homomeric complexes across cell junctions, between adjacent cells. Does not interact with DLG4. In terms of processing, N-glycosylated.

Its subcellular location is the cell membrane. The protein resides in the cell projection. The protein localises to the axon. It localises to the dendrite. It is found in the synapse. Its subcellular location is the presynaptic cell membrane. The protein resides in the postsynaptic cell membrane. Its function is as follows. Cell adhesion molecule that mediates homophilic cell-cell adhesion in a Ca(2+)-independent manner. Promotes neurite outgrowth in hippocampal neurons. This chain is Leucine-rich repeat and fibronectin type-III domain-containing protein 3 (LRFN3), found in Ailuropoda melanoleuca (Giant panda).